A 150-amino-acid chain; its full sequence is Molybdopterin synthase catalytic subunit (150 aa).

Residues 37–39 (KVR), 103–104 (HR), lysine 119, and 126–128 (KRE) each bind substrate.

It belongs to the MoaE family. Heterotetramer of 2 MoaD subunits and 2 MoaE subunits. Also stable as homodimer. The enzyme changes between these two forms during catalysis.

It carries out the reaction 2 [molybdopterin-synthase sulfur-carrier protein]-C-terminal-Gly-aminoethanethioate + cyclic pyranopterin phosphate + H2O = molybdopterin + 2 [molybdopterin-synthase sulfur-carrier protein]-C-terminal Gly-Gly + 2 H(+). It functions in the pathway cofactor biosynthesis; molybdopterin biosynthesis. In terms of biological role, converts molybdopterin precursor Z into molybdopterin. This requires the incorporation of two sulfur atoms into precursor Z to generate a dithiolene group. The sulfur is provided by MoaD. The protein is Molybdopterin synthase catalytic subunit (moaE) of Salmonella typhi.